Reading from the N-terminus, the 169-residue chain is Group 2 truncated hemoglobin 3-2 (169 aa).

Residue histidine 99 coordinates heme b.

This sequence belongs to the truncated hemoglobin family. Group II subfamily. Homodimer when ferric.

Its function is as follows. Hemoglobin-like protein that exhibits an unusual concentration-independent binding of O(2) and CO. Required for general plant development and during nodulation. May promote shoot organogenesis from root explants. This Medicago truncatula (Barrel medic) protein is Group 2 truncated hemoglobin 3-2.